A 637-amino-acid chain; its full sequence is ATP-dependent zinc metalloprotease FtsH (637 aa).

Topologically, residues 1–7 (MNRVFRN) are cytoplasmic. Residues 8 to 28 (TIFYLLILLVVIGVVSYFQTS) traverse the membrane as a helical segment. At 29-109 (NPKTENMSYS…VEPAQETSGW (81 aa)) the chain is on the extracellular side. The chain crosses the membrane as a helical span at residues 110 to 130 (VTFLTTIIPFVIIFILFFFLL). Over 131-637 (NQAQGGGSRV…TEEKKDDTKE (507 aa)) the chain is Cytoplasmic. Position 201–208 (201–208 (GPPGTGKT)) interacts with ATP. Histidine 423 is a binding site for Zn(2+). The active site involves glutamate 424. Zn(2+)-binding residues include histidine 427 and aspartate 499. The not necessary for FtsH function stretch occupies residues 514 to 637 (FGMSEKLGPL…TEEKKDDTKE (124 aa)).

In the central section; belongs to the AAA ATPase family. This sequence in the C-terminal section; belongs to the peptidase M41 family. In terms of assembly, homohexamer. Interacts with FloT at midcell. Interacts with FloA at midcell. Another study shows only minor colocalization with FloA or FloT. It depends on Zn(2+) as a cofactor.

It localises to the cell membrane. It is found in the membrane raft. Functionally, acts as a processive, ATP-dependent zinc metallopeptidase for both cytoplasmic and membrane proteins. Plays a role in the quality control of integral membrane proteins. In vitro partially degrades Spo0E, the phosphatase that acts on Spo0A-P. Recognition requires the last 14 residues of Spo0E. Its stabile accumulation requires FlotA and Flot. May degrade EzrA. The polypeptide is ATP-dependent zinc metalloprotease FtsH (Bacillus subtilis (strain 168)).